A 118-amino-acid chain; its full sequence is Large ribosomal subunit protein uL18 (118 aa).

It belongs to the universal ribosomal protein uL18 family. In terms of assembly, part of the 50S ribosomal subunit; part of the 5S rRNA/L5/L18/L25 subcomplex. Contacts the 5S and 23S rRNAs.

This is one of the proteins that bind and probably mediate the attachment of the 5S RNA into the large ribosomal subunit, where it forms part of the central protuberance. In Nitratiruptor sp. (strain SB155-2), this protein is Large ribosomal subunit protein uL18.